The following is a 613-amino-acid chain: Zinc metalloproteinase-disintegrin-like EoVMP2 (613 aa).

The first 20 residues, M1–S20, serve as a signal peptide directing secretion. Positions I21–E194 are excised as a propeptide. Residue Q195 is modified to Pyrrolidone carboxylic acid. The 197-residue stretch at R201–P397 folds into the Peptidase M12B domain. Residue E204 participates in Ca(2+) binding. N219 carries N-linked (GlcNAc...) asparagine glycosylation. Residue D288 coordinates Ca(2+). Disulfide bonds link C312–C392, C352–C376, and C354–C359. Residue H337 coordinates Zn(2+). E338 is a catalytic residue. Positions 341 and 347 each coordinate Zn(2+). An N-linked (GlcNAc...) asparagine glycan is attached at N375. Residues C392, N395, V407, N410, L412, E414, E417, and D420 each contribute to the Ca(2+) site. Residues P405–N491 form the Disintegrin domain. 14 disulfides stabilise this stretch: C408–C437, C419–C432, C421–C427, C431–C454, C445–C451, C450–C476, C463–C483, C470–C502, C495–C507, C514–C564, C529–C575, C542–C552, C559–C601, and C595–C606. The D/ECD-tripeptide motif lies at D469–D471.

Belongs to the venom metalloproteinase (M12B) family. P-III subfamily. P-IIIa sub-subfamily. As to quaternary structure, monomer. It depends on Zn(2+) as a cofactor. In terms of tissue distribution, expressed by the venom gland.

It localises to the secreted. Snake venom zinc metalloprotease that possesses high hemorrhagic activity. It inhibits collagen-induced platelet aggregation and activates prothrombin (F2). The sequence is that of Zinc metalloproteinase-disintegrin-like EoVMP2 (Svmp3-Eoc22) from Echis ocellatus (Ocellated saw-scaled viper).